The sequence spans 176 residues: Cytochrome b (176 aa).

Helical transmembrane passes span 33–53 (FGSL…FLAM), 77–98 (WVLR…YLHV), and 113–133 (WNMG…GYVL). Positions 83 and 97 each coordinate heme b.

The protein belongs to the cytochrome b family. As to quaternary structure, the cytochrome bc1 complex contains 11 subunits: 3 respiratory subunits (MT-CYB, CYC1 and UQCRFS1), 2 core proteins (UQCRC1 and UQCRC2) and 6 low-molecular weight proteins (UQCRH/QCR6, UQCRB/QCR7, UQCRQ/QCR8, UQCR10/QCR9, UQCR11/QCR10 and a cleavage product of UQCRFS1). This cytochrome bc1 complex then forms a dimer. The cofactor is heme b.

It is found in the mitochondrion inner membrane. Its function is as follows. Component of the ubiquinol-cytochrome c reductase complex (complex III or cytochrome b-c1 complex) that is part of the mitochondrial respiratory chain. The b-c1 complex mediates electron transfer from ubiquinol to cytochrome c. Contributes to the generation of a proton gradient across the mitochondrial membrane that is then used for ATP synthesis. This Nycticeius humeralis (Evening bat) protein is Cytochrome b (MT-CYB).